A 133-amino-acid chain; its full sequence is C-C motif chemokine 21a (133 aa).

An N-terminal signal peptide occupies residues 1 to 23 (MAQMMTLSLLSLVLALCIPWTQG). 3 disulfides stabilise this stretch: cysteine 31–cysteine 57, cysteine 32–cysteine 75, and cysteine 103–cysteine 122. The disordered stretch occupies residues 86–133 (LMRRLDQPPAPGKQSPGCRKNRGTSKSGKKGKGSKGCKRTEQTQPSRG). The tract at residues 98-133 (KQSPGCRKNRGTSKSGKKGKGSKGCKRTEQTQPSRG) is C-terminal basic extension. Residues 104-122 (RKNRGTSKSGKKGKGSKGC) show a composition bias toward basic residues.

It belongs to the intercrine beta (chemokine CC) family. As to quaternary structure, binds to CCR7 and to CXCR3. Interacts with PDPN; relocalizes PDPN to the basolateral membrane. Interacts with GPR174. Expressed strongly in lung, spleen, thymus, peripheral and mesentric lymph nodes. Also expressed in the testis, kidney, liver, and heart.

Its subcellular location is the secreted. Functionally, inhibits hemopoiesis and stimulates chemotaxis. Chemotactic in vitro for thymocytes and activated T-cells, but not for B-cells, macrophages, or neutrophils. Potent mesangial cell chemoattractant. Shows preferential activity towards naive T-cells. May play a role in mediating homing of lymphocytes to secondary lymphoid organs. The sequence is that of C-C motif chemokine 21a (Ccl21a) from Mus musculus (Mouse).